Consider the following 181-residue polypeptide: Large ribosomal subunit protein uL5c (181 aa).

It belongs to the universal ribosomal protein uL5 family. As to quaternary structure, part of the 50S ribosomal subunit; contacts the 5S rRNA.

The protein resides in the plastid. Its subcellular location is the chloroplast. Its function is as follows. Binds 5S rRNA, forms part of the central protuberance of the 50S subunit. This Porphyra purpurea (Red seaweed) protein is Large ribosomal subunit protein uL5c (rpl5).